A 185-amino-acid polypeptide reads, in one-letter code: Elongation factor P (185 aa).

Belongs to the elongation factor P family.

It localises to the cytoplasm. It functions in the pathway protein biosynthesis; polypeptide chain elongation. Involved in peptide bond synthesis. Stimulates efficient translation and peptide-bond synthesis on native or reconstituted 70S ribosomes in vitro. Probably functions indirectly by altering the affinity of the ribosome for aminoacyl-tRNA, thus increasing their reactivity as acceptors for peptidyl transferase. The protein is Elongation factor P of Limosilactobacillus fermentum (strain NBRC 3956 / LMG 18251) (Lactobacillus fermentum).